Reading from the N-terminus, the 226-residue chain is ATP synthase F(0) complex subunit a (226 aa).

6 helical membrane passes run 12 to 32 (PTVL…LLVP), 68 to 88 (WSLM…LGLF), 97 to 117 (QLSM…AMGL), 138 to 158 (IPML…ALAV), 164 to 184 (ITAG…MLTI), and 189 to 209 (TLIT…VALI).

The protein belongs to the ATPase A chain family. In terms of assembly, component of the ATP synthase complex composed at least of ATP5F1A/subunit alpha, ATP5F1B/subunit beta, ATP5MC1/subunit c (homooctomer), MT-ATP6/subunit a, MT-ATP8/subunit 8, ATP5ME/subunit e, ATP5MF/subunit f, ATP5MG/subunit g, ATP5MK/subunit k, ATP5MJ/subunit j, ATP5F1C/subunit gamma, ATP5F1D/subunit delta, ATP5F1E/subunit epsilon, ATP5PF/subunit F6, ATP5PB/subunit b, ATP5PD/subunit d, ATP5PO/subunit OSCP. ATP synthase complex consists of a soluble F(1) head domain (subunits alpha(3) and beta(3)) - the catalytic core - and a membrane F(0) domain - the membrane proton channel (subunits c, a, 8, e, f, g, k and j). These two domains are linked by a central stalk (subunits gamma, delta, and epsilon) rotating inside the F1 region and a stationary peripheral stalk (subunits F6, b, d, and OSCP). Interacts with DNAJC30; interaction is direct.

The protein resides in the mitochondrion inner membrane. The enzyme catalyses H(+)(in) = H(+)(out). Functionally, subunit a, of the mitochondrial membrane ATP synthase complex (F(1)F(0) ATP synthase or Complex V) that produces ATP from ADP in the presence of a proton gradient across the membrane which is generated by electron transport complexes of the respiratory chain. ATP synthase complex consist of a soluble F(1) head domain - the catalytic core - and a membrane F(1) domain - the membrane proton channel. These two domains are linked by a central stalk rotating inside the F(1) region and a stationary peripheral stalk. During catalysis, ATP synthesis in the catalytic domain of F(1) is coupled via a rotary mechanism of the central stalk subunits to proton translocation. With the subunit c (ATP5MC1), forms the proton-conducting channel in the F(0) domain, that contains two crucial half-channels (inlet and outlet) that facilitate proton movement from the mitochondrial intermembrane space (IMS) into the matrix. Protons are taken up via the inlet half-channel and released through the outlet half-channel, following a Grotthuss mechanism. The polypeptide is ATP synthase F(0) complex subunit a (Pongo pygmaeus (Bornean orangutan)).